The primary structure comprises 234 residues: uncharacterized protein (234 aa).

Residues 13 to 32 (KSINYYIFFFQYTLVYNTIQ) traverse the membrane as a helical segment. Disordered stretches follow at residues 102–130 (HSKT…SSNS) and 159–185 (ESDS…SEYE). Positions 103–130 (SKTTSLPFSSSSPQSSSSSSSSSSSSNS) are enriched in low complexity. Over residues 167–185 (EFDSESNSDFDSESESEYE) the composition is skewed to acidic residues.

The protein resides in the membrane. This is an uncharacterized protein from Dictyostelium discoideum (Social amoeba).